Here is a 356-residue protein sequence, read N- to C-terminus: N-methyltransferase 4 (356 aa).

S-adenosyl-L-methionine-binding positions include 93–94, 128–136, and 155–160; these read QS, ILDIGCGFG, and TNSAEQ.

Belongs to the CFA/CMAS family. In terms of tissue distribution, expressed in stems, roots, flower buds and leaves.

In terms of biological role, probable N-methyltransferase not involved in benzylisoquinoline metabolism. Shows no detectable activity with (s)-coclaurine, (R)- or (S)-reticuline, papaverine or (R,S)-tetrahydropapaverine. The protein is N-methyltransferase 4 (NMT4) of Papaver somniferum (Opium poppy).